The following is a 170-amino-acid chain: Adenine phosphoribosyltransferase (170 aa).

This sequence belongs to the purine/pyrimidine phosphoribosyltransferase family. As to quaternary structure, homodimer.

Its subcellular location is the cytoplasm. The enzyme catalyses AMP + diphosphate = 5-phospho-alpha-D-ribose 1-diphosphate + adenine. It functions in the pathway purine metabolism; AMP biosynthesis via salvage pathway; AMP from adenine: step 1/1. Catalyzes a salvage reaction resulting in the formation of AMP, that is energically less costly than de novo synthesis. This chain is Adenine phosphoribosyltransferase, found in Carboxydothermus hydrogenoformans (strain ATCC BAA-161 / DSM 6008 / Z-2901).